Reading from the N-terminus, the 543-residue chain is Protein male-specific lethal-3 (543 aa).

Residues 10–90 (LFNRGEKVLC…KLQRELAEAA (81 aa)) form the Chromo domain. The interval 93–247 (QKTGGYSYKD…THTTDAEKRI (155 aa)) is disordered. Composition is skewed to basic and acidic residues over residues 180-202 (RSRDGSGNRSRDGSGNRSRDNSS), 210-224 (KSKGGDKNDDGERRS), and 234-247 (SPKDTHTTDAEKRI). The MRG domain occupies 249-542 (QEDRVMLRIS…PLIDQGRELS (294 aa)).

Component of the male-specific lethal (MSL) histone acetyltransferase complex, composed of mof, mle, msl-1, msl-2 and msl-3 proteins, as well as roX1 and roX2 non-coding RNAs. In terms of processing, ubiquitinated by msl-2.

Its subcellular location is the nucleus. The protein resides in the chromosome. Functionally, component of the male-specific lethal (MSL) histone acetyltransferase complex, a multiprotein complex essential for elevating transcription of the single X chromosome in the male (X chromosome dosage compensation). The MSL complex specifically associates with the single X chromosome in males and mediates formation of H4K16ac, promoting a two-fold activation of X chromosome. Acts as a histone reader that specifically recognizes and binds histone H3 trimethylated at 'Lys-36' (H3K36me3) and histone H4 monomethylated at 'Lys-20' (H4K20me1). Within the MSL complex, mediates the spreading of the MSL complex from initiation sites on the male X chromosome to flanking chromatin. Following initial recruitment of the MSL complex to male X chromosome by msl-2, msl-3 binds H3K36me3 and promotes spreading of the MSL complex in cis. In addition to its role in dosage compensation in males, promotes germline stem cell differentiation in females: recognizes and binds H3K36me3, promoting recruitment of the ATAC complex and transcription of genes, such as RpS19b. This chain is Protein male-specific lethal-3 (msl-3), found in Drosophila virilis (Fruit fly).